The sequence spans 234 residues: Peptidyl-prolyl cis-trans isomerase, rhodopsin-specific isozyme (234 aa).

The first 19 residues, 1–19 (MNILKILILLELIYTCVSG), serve as a signal peptide directing secretion. Residues 29-187 (YMDVKHQKKP…DPVIIVNCGE (159 aa)) enclose the PPIase cyclophilin-type domain. N-linked (GlcNAc...) asparagine glycosylation occurs at N67. Residues 202-222 (ILGWIKAAGLPFCSSFIVLMI) form a helical membrane-spanning segment.

It belongs to the cyclophilin-type PPIase family. Expressed specifically in photoreceptor cells.

It localises to the membrane. It carries out the reaction [protein]-peptidylproline (omega=180) = [protein]-peptidylproline (omega=0). In terms of biological role, PPIases accelerate the folding of proteins. It catalyzes the cis-trans isomerization of proline imidic peptide bonds in oligopeptides. Acts on the folding of rhodopsin RH1 and RH2 (but not RH3) and is required for visual transduction. The sequence is that of Peptidyl-prolyl cis-trans isomerase, rhodopsin-specific isozyme (NINAA) from Calliphora vicina (Blue blowfly).